A 172-amino-acid chain; its full sequence is Inorganic pyrophosphatase (172 aa).

Lys26, Arg40, and Tyr52 together coordinate substrate. Mg(2+) contacts are provided by Asp62, Asp67, and Asp99. Tyr138 provides a ligand contact to substrate.

It belongs to the PPase family. Homohexamer. The cofactor is Mg(2+).

It is found in the cytoplasm. It catalyses the reaction diphosphate + H2O = 2 phosphate + H(+). Its function is as follows. Catalyzes the hydrolysis of inorganic pyrophosphate (PPi) forming two phosphate ions. This chain is Inorganic pyrophosphatase, found in Saccharolobus solfataricus (strain ATCC 35092 / DSM 1617 / JCM 11322 / P2) (Sulfolobus solfataricus).